Here is a 160-residue protein sequence, read N- to C-terminus: Methyl-coenzyme M reductase operon protein D (160 aa).

As to quaternary structure, MCR is composed of three subunits: alpha, beta, and gamma. The function of proteins C and D is not known.

The polypeptide is Methyl-coenzyme M reductase operon protein D (mcrD) (Methanococcus vannielii).